Consider the following 876-residue polypeptide: Alanine--tRNA ligase (876 aa).

Zn(2+)-binding residues include H568, H572, C670, and H674.

This sequence belongs to the class-II aminoacyl-tRNA synthetase family. It depends on Zn(2+) as a cofactor.

Its subcellular location is the cytoplasm. The catalysed reaction is tRNA(Ala) + L-alanine + ATP = L-alanyl-tRNA(Ala) + AMP + diphosphate. Functionally, catalyzes the attachment of alanine to tRNA(Ala) in a two-step reaction: alanine is first activated by ATP to form Ala-AMP and then transferred to the acceptor end of tRNA(Ala). Also edits incorrectly charged Ser-tRNA(Ala) and Gly-tRNA(Ala) via its editing domain. The polypeptide is Alanine--tRNA ligase (Geobacter metallireducens (strain ATCC 53774 / DSM 7210 / GS-15)).